A 688-amino-acid polypeptide reads, in one-letter code: Elongation factor G (688 aa).

Positions 8 to 282 constitute a tr-type G domain; it reads KNFRNFGIMA…AVVDFLPSPV (275 aa). GTP contacts are provided by residues 17-24, 81-85, and 135-138; these read AHIDAGKT, DTPGH, and NKMD.

It belongs to the TRAFAC class translation factor GTPase superfamily. Classic translation factor GTPase family. EF-G/EF-2 subfamily.

It is found in the cytoplasm. Catalyzes the GTP-dependent ribosomal translocation step during translation elongation. During this step, the ribosome changes from the pre-translocational (PRE) to the post-translocational (POST) state as the newly formed A-site-bound peptidyl-tRNA and P-site-bound deacylated tRNA move to the P and E sites, respectively. Catalyzes the coordinated movement of the two tRNA molecules, the mRNA and conformational changes in the ribosome. In Mycoplasma genitalium (strain ATCC 33530 / DSM 19775 / NCTC 10195 / G37) (Mycoplasmoides genitalium), this protein is Elongation factor G (fusA).